Here is a 490-residue protein sequence, read N- to C-terminus: Metalloreductase STEAP2 (490 aa).

Residues 38–41 (SGDF), 60–61 (SR), 93–100 (IHREHYTS), Asn118, and Ala151 each bind NADP(+). The FAD site is built by Trp152 and Asp160. A helical transmembrane segment spans residues 208 to 228 (LFTLWRGPVVVAISLATFFFL). Tyr229 is a binding site for Fe(3+). Residues 259–279 (LPIVAITLLSLVYLAGLLAAA) form a helical membrane-spanning segment. Positions 259-407 (LPIVAITLLS…LGYVALLIST (149 aa)) constitute a Ferric oxidoreductase domain. Gln281 and Arg302 together coordinate FAD. 4 helical membrane-spanning segments follow: residues 305 to 325 (LGLL…CLPM), 359 to 379 (MYIS…VTSI), 393 to 413 (FIQS…VLIY), and 432 to 452 (FVLA…LFLP). His316 provides a ligand contact to heme b. Fe(3+) is bound at residue Tyr319. FAD-binding residues include Ser378 and Gln395. His409 provides a ligand contact to heme b. Phosphoserine is present on Ser483.

The protein belongs to the STEAP family. It depends on FAD as a cofactor. Requires heme b as cofactor. Expressed at high levels in prostate and at significantly lower levels in heart, brain, kidney, pancreas, and ovary.

The protein resides in the endosome membrane. It localises to the cell membrane. It carries out the reaction 2 Fe(2+) + NADP(+) + H(+) = 2 Fe(3+) + NADPH. The enzyme catalyses 2 Cu(+) + NADP(+) + H(+) = 2 Cu(2+) + NADPH. Integral membrane protein that functions as a NADPH-dependent ferric-chelate reductase, using NADPH from one side of the membrane to reduce a Fe(3+) chelate that is bound on the other side of the membrane. Mediates sequential transmembrane electron transfer from NADPH to FAD and onto heme, and finally to the Fe(3+) chelate. Can also reduce Cu(2+) to Cu(1+). The chain is Metalloreductase STEAP2 (STEAP2) from Homo sapiens (Human).